The sequence spans 560 residues: Membrane protein insertase YidC (560 aa).

The next 6 membrane-spanning stretches (helical) occupy residues 5 to 25 (IINLIAAIILSLSIIFGWQYF), 334 to 354 (AIDFGWFYIITKPVFYAMNFF), 357 to 377 (YVGNFGVSILIVTVIIKLLMF), 431 to 451 (LPILVQIPVFFSIYKVLYVTI), 476 to 496 (LFGLLPFAPPSFLMIGAWPIL), and 522 to 542 (FMPLIFLFMFSSFPVGLLIYW).

This sequence belongs to the OXA1/ALB3/YidC family. Type 1 subfamily. Interacts with the Sec translocase complex via SecD. Specifically interacts with transmembrane segments of nascent integral membrane proteins during membrane integration.

Its subcellular location is the cell inner membrane. Required for the insertion and/or proper folding and/or complex formation of integral membrane proteins into the membrane. Involved in integration of membrane proteins that insert both dependently and independently of the Sec translocase complex, as well as at least some lipoproteins. Aids folding of multispanning membrane proteins. This is Membrane protein insertase YidC from Rickettsia rickettsii (strain Iowa).